A 149-amino-acid polypeptide reads, in one-letter code: Transcriptional repressor NrdR (149 aa).

A zinc finger spans residues 3–34 (CPYCSYEESKVVDSRSAEDYNAIRRRRECLRC). The 91-residue stretch at 49-139 (ILVIKKDLSR…VYRQFKDINT (91 aa)) folds into the ATP-cone domain.

It belongs to the NrdR family. The cofactor is Zn(2+).

Its function is as follows. Negatively regulates transcription of bacterial ribonucleotide reductase nrd genes and operons by binding to NrdR-boxes. In Clostridium perfringens (strain SM101 / Type A), this protein is Transcriptional repressor NrdR.